A 218-amino-acid polypeptide reads, in one-letter code: Small ribosomal subunit protein uS3 (218 aa).

The 69-residue stretch at 38 to 106 (IRKFIATKLA…RVHINIVEIK (69 aa)) folds into the KH type-2 domain.

This sequence belongs to the universal ribosomal protein uS3 family. As to quaternary structure, part of the 30S ribosomal subunit. Forms a tight complex with proteins S10 and S14.

Binds the lower part of the 30S subunit head. Binds mRNA in the 70S ribosome, positioning it for translation. The chain is Small ribosomal subunit protein uS3 from Enterococcus faecalis (strain ATCC 700802 / V583).